Reading from the N-terminus, the 231-residue chain is Ion-translocating oxidoreductase complex subunit E (231 aa).

6 consecutive transmembrane segments (helical) span residues 18 to 38, 39 to 59, 63 to 83, 86 to 106, 125 to 145, and 182 to 202; these read ALVQ…ATNA, LGLG…ISTL, TPAE…VSAV, LINA…PLIV, ALSA…MFVL, and PFLL…MLAG.

It belongs to the NqrDE/RnfAE family. The complex is composed of six subunits: RsxA, RsxB, RsxC, RsxD, RsxE and RsxG.

The protein localises to the cell inner membrane. Its function is as follows. Part of a membrane-bound complex that couples electron transfer with translocation of ions across the membrane. Required to maintain the reduced state of SoxR. The polypeptide is Ion-translocating oxidoreductase complex subunit E (Escherichia coli (strain ATCC 8739 / DSM 1576 / NBRC 3972 / NCIMB 8545 / WDCM 00012 / Crooks)).